We begin with the raw amino-acid sequence, 94 residues long: Small ribosomal subunit protein uS19 (94 aa).

Belongs to the universal ribosomal protein uS19 family.

Functionally, protein S19 forms a complex with S13 that binds strongly to the 16S ribosomal RNA. In Wolbachia pipientis subsp. Culex pipiens (strain wPip), this protein is Small ribosomal subunit protein uS19.